Here is a 96-residue protein sequence, read N- to C-terminus: Transcriptional regulator ATRY (96 aa).

Residues 1-12 (VICTACGQQVNQ) form a GATA-type; atypical zinc finger. Residues 1–96 (VICTACGQQV…IAVCDSVLEN (96 aa)) enclose the ADD domain. The PHD-type; atypical zinc finger occupies 27–82 (LICKRWCAEGGNLICCDSCHNAFCKKCIWRNLGRKEISKIMNEKNEWHCYICCPEP).

This sequence belongs to the SNF2/RAD54 helicase family. In terms of tissue distribution, expressed in developing and adult testis. Also weakly expressed in prostate and epididymis.

The protein resides in the nucleus. It carries out the reaction ATP + H2O = ADP + phosphate + H(+). Functionally, could be a global transcriptional regulator. Modifies gene expression by affecting chromatin. In Notamacropus eugenii (Tammar wallaby), this protein is Transcriptional regulator ATRY (ATRY).